An 88-amino-acid polypeptide reads, in one-letter code: Small ribosomal subunit protein bS16 (88 aa).

Belongs to the bacterial ribosomal protein bS16 family.

This chain is Small ribosomal subunit protein bS16, found in Geotalea daltonii (strain DSM 22248 / JCM 15807 / FRC-32) (Geobacter daltonii).